A 711-amino-acid polypeptide reads, in one-letter code: Ribosomal RNA large subunit methyltransferase K/L (711 aa).

The THUMP domain occupies 43 to 154; the sequence is TLYRTLLWSR…RENLVISLDL (112 aa).

It belongs to the methyltransferase superfamily. RlmKL family.

It localises to the cytoplasm. The catalysed reaction is guanosine(2445) in 23S rRNA + S-adenosyl-L-methionine = N(2)-methylguanosine(2445) in 23S rRNA + S-adenosyl-L-homocysteine + H(+). The enzyme catalyses guanosine(2069) in 23S rRNA + S-adenosyl-L-methionine = N(2)-methylguanosine(2069) in 23S rRNA + S-adenosyl-L-homocysteine + H(+). Specifically methylates the guanine in position 2445 (m2G2445) and the guanine in position 2069 (m7G2069) of 23S rRNA. The protein is Ribosomal RNA large subunit methyltransferase K/L of Haemophilus influenzae (strain 86-028NP).